The following is a 170-amino-acid chain: F1 capsule antigen (170 aa).

The N-terminal stretch at 1 to 21 (MKKISSVIAIALFGTIATANA) is a signal peptide. The contains potential antigenic determinants that may stimulate T-cells stretch occupies residues 100 to 150 (GNNHQFTTKVIGKDSRDFDISPKVNGENLVGDDVVLATGSQDFFVRSIGSK).

The protein resides in the secreted. Its subcellular location is the capsule. This chain is F1 capsule antigen (caf1), found in Yersinia pestis.